A 391-amino-acid chain; its full sequence is Phosphoglycerate kinase (391 aa).

Residues 21-23 (DLN), R36, 59-62 (HLGR), R114, and R147 each bind substrate. ATP is bound by residues K198, E315, and 344-347 (GGDT).

This sequence belongs to the phosphoglycerate kinase family. Monomer.

The protein localises to the cytoplasm. It carries out the reaction (2R)-3-phosphoglycerate + ATP = (2R)-3-phospho-glyceroyl phosphate + ADP. Its pathway is carbohydrate degradation; glycolysis; pyruvate from D-glyceraldehyde 3-phosphate: step 2/5. This is Phosphoglycerate kinase from Actinobacillus pleuropneumoniae serotype 5b (strain L20).